The following is a 393-amino-acid chain: MQDVVIVAATRTAVGSFQGSLAGIPAPELGAAVIRRLLEQTGLDAGQVDEVILGQVLTAGSGQNPARQAAIKAGLPVGVPAMTLNKVCGSGLKALHLGAQAIRCGDAEVIVAGGQENMSLAPYVMPGARTGLRMGHAKLVDSMIEDGLWDAFNDYHMGITAENLAEKYGLTREEQDAFAAASQQKAIAAIEGGRFRDEITPIQVPQRKGEPLGFDTDEQPRAGTTVEALAKLKPAFRKDGSVTAGNASSLNDGAAAVLLMSAAKAKALGLPVLARIASYASAGVDPAIMGIGPVSATRRALDKAGWSLEQLDLIEANEAFAAQSLAVGRELGWDAARVNVNGGAIALGHPIGASGCRVLVTLLHEMIRRDAKKGLATLCIGGGQGVALTLARD.

Cysteine 88 functions as the Acyl-thioester intermediate in the catalytic mechanism. Residues histidine 349 and cysteine 379 each act as proton acceptor in the active site.

Belongs to the thiolase-like superfamily. Thiolase family.

It is found in the cytoplasm. The catalysed reaction is 2 acetyl-CoA = acetoacetyl-CoA + CoA. It participates in metabolic intermediate biosynthesis; (R)-mevalonate biosynthesis; (R)-mevalonate from acetyl-CoA: step 1/3. This chain is Acetyl-CoA acetyltransferase (atoB), found in Pseudomonas aeruginosa (strain ATCC 15692 / DSM 22644 / CIP 104116 / JCM 14847 / LMG 12228 / 1C / PRS 101 / PAO1).